An 890-amino-acid polypeptide reads, in one-letter code: Alanine--tRNA ligase (890 aa).

His-564, His-568, Cys-677, and His-681 together coordinate Zn(2+).

It belongs to the class-II aminoacyl-tRNA synthetase family. Requires Zn(2+) as cofactor.

Its subcellular location is the cytoplasm. The catalysed reaction is tRNA(Ala) + L-alanine + ATP = L-alanyl-tRNA(Ala) + AMP + diphosphate. Its function is as follows. Catalyzes the attachment of alanine to tRNA(Ala) in a two-step reaction: alanine is first activated by ATP to form Ala-AMP and then transferred to the acceptor end of tRNA(Ala). Also edits incorrectly charged Ser-tRNA(Ala) and Gly-tRNA(Ala) via its editing domain. The polypeptide is Alanine--tRNA ligase (Rhodopseudomonas palustris (strain BisB18)).